The primary structure comprises 232 residues: Phosphatidylserine decarboxylase proenzyme (232 aa).

The Schiff-base intermediate with substrate; via pyruvic acid role is filled by serine 190. Position 190 is a pyruvic acid (Ser); by autocatalysis (serine 190).

Belongs to the phosphatidylserine decarboxylase family. PSD-A subfamily. In terms of assembly, heterodimer of a large membrane-associated beta subunit and a small pyruvoyl-containing alpha subunit. Pyruvate serves as cofactor. Is synthesized initially as an inactive proenzyme. Formation of the active enzyme involves a self-maturation process in which the active site pyruvoyl group is generated from an internal serine residue via an autocatalytic post-translational modification. Two non-identical subunits are generated from the proenzyme in this reaction, and the pyruvate is formed at the N-terminus of the alpha chain, which is derived from the carboxyl end of the proenzyme. The post-translation cleavage follows an unusual pathway, termed non-hydrolytic serinolysis, in which the side chain hydroxyl group of the serine supplies its oxygen atom to form the C-terminus of the beta chain, while the remainder of the serine residue undergoes an oxidative deamination to produce ammonia and the pyruvoyl prosthetic group on the alpha chain.

The protein localises to the cell membrane. The catalysed reaction is a 1,2-diacyl-sn-glycero-3-phospho-L-serine + H(+) = a 1,2-diacyl-sn-glycero-3-phosphoethanolamine + CO2. It functions in the pathway phospholipid metabolism; phosphatidylethanolamine biosynthesis; phosphatidylethanolamine from CDP-diacylglycerol: step 2/2. In terms of biological role, catalyzes the formation of phosphatidylethanolamine (PtdEtn) from phosphatidylserine (PtdSer). This chain is Phosphatidylserine decarboxylase proenzyme, found in Methylocella silvestris (strain DSM 15510 / CIP 108128 / LMG 27833 / NCIMB 13906 / BL2).